The following is a 669-amino-acid chain: Beta-galactosidase (669 aa).

The signal sequence occupies residues 1–24 (MDFPGAARLLSLLLVPLLLGPARG). A propeptide spanning residues 25–29 (LRNAS) is cleaved from the precursor. A glycan (N-linked (GlcNAc...) asparagine) is linked at Asn27. Substrate is bound by residues Tyr84, Glu130, and Asn188. The Proton donor role is filled by Glu189. A disulfide bridge links Cys196 with Cys231. N-linked (GlcNAc...) asparagine glycosylation occurs at Asn248. Catalysis depends on Glu269, which acts as the Nucleophile. Residue Tyr334 participates in substrate binding. 4 N-linked (GlcNAc...) asparagine glycosylation sites follow: Asn465, Asn499, Asn547, and Asn557. Cysteines 628 and 636 form a disulfide. A disordered region spans residues 649–669 (TPTSSHPLPDLSDRDSGWDRV). The segment covering 659–669 (LSDRDSGWDRV) has biased composition (basic and acidic residues).

Belongs to the glycosyl hydrolase 35 family. Homodimer. May form higher multimers.

It localises to the lysosome. It carries out the reaction Hydrolysis of terminal non-reducing beta-D-galactose residues in beta-D-galactosides.. In terms of biological role, cleaves beta-linked terminal galactosyl residues from gangliosides, glycoproteins, and glycosaminoglycans. The protein is Beta-galactosidase (GLB1) of Felis catus (Cat).